Here is a 335-residue protein sequence, read N- to C-terminus: Fructose-1,6-bisphosphatase class 1 (335 aa).

Residues Glu90, Asp112, Leu114, and Asp115 each coordinate Mg(2+). Residues 115 to 118 (DGSS), Asn210, and Lys276 contribute to the substrate site. Glu282 is a Mg(2+) binding site.

The protein belongs to the FBPase class 1 family. In terms of assembly, homotetramer. Mg(2+) serves as cofactor.

The protein localises to the cytoplasm. The enzyme catalyses beta-D-fructose 1,6-bisphosphate + H2O = beta-D-fructose 6-phosphate + phosphate. The protein operates within carbohydrate biosynthesis; gluconeogenesis. The polypeptide is Fructose-1,6-bisphosphatase class 1 (Ectopseudomonas mendocina (strain ymp) (Pseudomonas mendocina)).